Consider the following 569-residue polypeptide: Proline--tRNA ligase (569 aa).

The protein belongs to the class-II aminoacyl-tRNA synthetase family. ProS type 1 subfamily. As to quaternary structure, homodimer.

Its subcellular location is the cytoplasm. It carries out the reaction tRNA(Pro) + L-proline + ATP = L-prolyl-tRNA(Pro) + AMP + diphosphate. Functionally, catalyzes the attachment of proline to tRNA(Pro) in a two-step reaction: proline is first activated by ATP to form Pro-AMP and then transferred to the acceptor end of tRNA(Pro). As ProRS can inadvertently accommodate and process non-cognate amino acids such as alanine and cysteine, to avoid such errors it has two additional distinct editing activities against alanine. One activity is designated as 'pretransfer' editing and involves the tRNA(Pro)-independent hydrolysis of activated Ala-AMP. The other activity is designated 'posttransfer' editing and involves deacylation of mischarged Ala-tRNA(Pro). The misacylated Cys-tRNA(Pro) is not edited by ProRS. This is Proline--tRNA ligase from Latilactobacillus sakei subsp. sakei (strain 23K) (Lactobacillus sakei subsp. sakei).